The primary structure comprises 309 residues: WD repeat domain phosphoinositide-interacting protein 4 (309 aa).

Residues 4 to 42 form a WD 1 repeat; it reads QPLRGVTSLHFNQDQSCFCCAMETGVRIYNVEPLMEKGH. The L/FRRG motif motif lies at 180-183; that stretch reads LRRG. A WD 2 repeat occupies 184–223; sequence TDPATLYCINFSHDSSFLCASSDKGTVHIFALKDTRLNRR.

Belongs to the WD repeat PROPPIN family. In terms of assembly, interacts with WIPI1. Interacts with WIPI2. Interacts with ATG2A and ATG2B. Interacts with ULK1. May interact with the PRKAA1, PRKAA2, PRKAB1 and PRKAG1 subunits of the AMPK kinase. May interact with NUDC.

The protein localises to the preautophagosomal structure. Its subcellular location is the cytoplasm. Component of the autophagy machinery that controls the major intracellular degradation process by which cytoplasmic materials are packaged into autophagosomes and delivered to lysosomes for degradation. Binds phosphatidylinositol 3-phosphate (PtdIns3P). Activated by the STK11/AMPK signaling pathway upon starvation, WDR45 is involved in autophagosome assembly downstream of WIPI2, regulating the size of forming autophagosomes. Together with WIPI1, promotes ATG2 (ATG2A or ATG2B)-mediated lipid transfer by enhancing ATG2-association with phosphatidylinositol 3-monophosphate (PI3P)-containing membranes. Probably recruited to membranes through its PtdIns3P activity. The chain is WD repeat domain phosphoinositide-interacting protein 4 (Wdr45) from Rattus norvegicus (Rat).